We begin with the raw amino-acid sequence, 186 residues long: MQSVDLTHHFLIAMPAMTDPFFAKTLTYICEHSDQGALGLVVNRPIDLTLKDLLDQLDISSDDQLTRRFPIMFGGPIQLDRGFVLHQPVGEWQSTMAVNDDVGLTTSLDILRAIANGESPRQLLVALGYSGWAPGQIEHELSRNAWLTVPASPAIIFELPAEERLTAAMRLLGVDFSSLSDEVGHA.

Belongs to the UPF0301 (AlgH) family.

The protein is UPF0301 protein Nmul_A2478 of Nitrosospira multiformis (strain ATCC 25196 / NCIMB 11849 / C 71).